The primary structure comprises 675 residues: MPESTQQSHLSLDHEKMQQPPKGFTERSKTKPNLADFETYQKLYKQSIENPNEFFTQQAKENLDWFKPFDLARFPVDPKDDYKNGDLPAWFINGQLNACYNAVDRWAIKNPDKPAIIYEGDEPDQGRIITYGELLKQVSKLAQALTKLGVKKGDSVAVYLPMIPEAIVTLLAIVRIGAMHSVVFAGFSSASLRDRILDADSRIVITADESKRGGKTIETKKIVDDALKECPKVRNVIVFKRTGNSHVPFSPGRDLWWHDEMAKYGPYFPPVPVNSEDPLFLLYTSGSTGKPKGVQHNTAGYLLGAVLTTKYTFDVHEDDILFTAGDIGWITGHTYCVYGPLLAGATSVVFEGTPAYPNYSRYWEIVDKYKVNQFYVAPTALRLLKRAGTKYVEKYDLSSLRVLGSVGEPIAAEVWHWYNDNIGRGQAHIVDTYWQTESGSHLLTPLAGITPTKPGSASLPFFGVDPKILDPTTGEELPDNDVEGVLAIKSAWPSITRGIYNDYNRFIDTYLAPYANYYFSGDGAARDRDGFYWILGRVDDVVNVSGHRLSTAEIEAALIEHPIVGESAVVGYADELTGQAVAAYVSLKKDKAVGEDVENIKKEMILTVRKEIGPFAAPKMILLVDDLPKTRSGKIMRRILRKVLAGEEDQLGDISTLSNPGVVQQIIDVVHHAKK.

Over residues 1–10 (MPESTQQSHL) the composition is skewed to polar residues. The interval 1–32 (MPESTQQSHLSLDHEKMQQPPKGFTERSKTKP) is disordered. Residues 212–215 (RGGK) and threonine 331 each bind CoA. ATP is bound by residues 407-409 (GEP), 431-436 (DTYWQT), aspartate 522, and arginine 537. Serine 545 contributes to the CoA binding site. Arginine 548 provides a ligand contact to ATP. Residue arginine 609 coordinates CoA.

The protein belongs to the ATP-dependent AMP-binding enzyme family.

The catalysed reaction is acetate + ATP + CoA = acetyl-CoA + AMP + diphosphate. This Candida albicans (Yeast) protein is Acetyl-coenzyme A synthetase 1 (ACS1).